The chain runs to 538 residues: Anti-bacteriophage protein A (538 aa).

As to quaternary structure, interacts with AbpB.

Functionally, part of an antiviral system composed of AbpA and AbpB; when both are expressed from a plasmid they confer resistance to phages T2, T4, T7 and lambda but not RB32 or RB69. Resistance is temperature dependent, it can be seen at 30 degrees Celsius but not at 37 or 42 degrees Celsius. The system impairs phage but not bacterial DNA synthesis (shown for T4, T7 and lambda). Partially suppressed by mutations in T4 gene 41, a replicative helicase. The protein is Anti-bacteriophage protein A of Escherichia coli (strain K12).